The chain runs to 40 residues: Photosystem II reaction center protein Y (40 aa).

Residues leucine 4–isoleucine 22 form a helical membrane-spanning segment.

The protein belongs to the PsbY family. PSII is composed of 1 copy each of membrane proteins PsbA, PsbB, PsbC, PsbD, PsbE, PsbF, PsbH, PsbI, PsbJ, PsbK, PsbL, PsbM, PsbT, PsbX, PsbY, Psb30/Ycf12, peripheral proteins PsbO, CyanoQ (PsbQ), PsbU, PsbV and a large number of cofactors. It forms dimeric complexes.

It localises to the cellular thylakoid membrane. Loosely associated component of the core of photosystem II (PSII), it is not always seen in crystals. PSII is a light-driven water plastoquinone oxidoreductase, using light energy to abstract electrons from H(2)O, generating a proton gradient subsequently used for ATP formation. In Prochlorococcus marinus (strain SARG / CCMP1375 / SS120), this protein is Photosystem II reaction center protein Y.